The sequence spans 238 residues: ATP-dependent dethiobiotin synthetase BioD (238 aa).

Glu-13–Val-18 serves as a coordination point for ATP. Residue Thr-17 participates in Mg(2+) binding. Residue Lys-38 is part of the active site. Substrate is bound at residue Thr-42. 2 residues coordinate Mg(2+): Arg-59 and Glu-111. ATP-binding positions include Glu-111–Gly-114, Asn-175–Gln-176, and Pro-204–Leu-206.

This sequence belongs to the dethiobiotin synthetase family. In terms of assembly, homodimer. Mg(2+) is required as a cofactor.

It localises to the cytoplasm. It catalyses the reaction (7R,8S)-7,8-diammoniononanoate + CO2 + ATP = (4R,5S)-dethiobiotin + ADP + phosphate + 3 H(+). Its pathway is cofactor biosynthesis; biotin biosynthesis; biotin from 7,8-diaminononanoate: step 1/2. Functionally, catalyzes a mechanistically unusual reaction, the ATP-dependent insertion of CO2 between the N7 and N8 nitrogen atoms of 7,8-diaminopelargonic acid (DAPA, also called 7,8-diammoniononanoate) to form a ureido ring. In Geobacillus kaustophilus (strain HTA426), this protein is ATP-dependent dethiobiotin synthetase BioD.